Here is a 53-residue protein sequence, read N- to C-terminus: Sec-independent protein translocase protein TatA (53 aa).

A helical membrane pass occupies residues 1-21 (MGMSFSHLLIVLLIIFVLFGA).

It belongs to the TatA/E family. In terms of assembly, the Tat system comprises two distinct complexes: a TatABC complex, containing multiple copies of TatA, TatB and TatC subunits, and a separate TatA complex, containing only TatA subunits. Substrates initially bind to the TatABC complex, which probably triggers association of the separate TatA complex to form the active translocon.

It is found in the cell inner membrane. Functionally, part of the twin-arginine translocation (Tat) system that transports large folded proteins containing a characteristic twin-arginine motif in their signal peptide across membranes. TatA could form the protein-conducting channel of the Tat system. In Rickettsia typhi (strain ATCC VR-144 / Wilmington), this protein is Sec-independent protein translocase protein TatA.